We begin with the raw amino-acid sequence, 37 residues long: TLTGYIANFSVLNXEAYLFINDKYVLLDYAPGTXNDK.

The stretch at 6–37 (IANFSVLNXEAYLFINDKYVLLDYAPGTXNDK) is one Hemopexin repeat.

In terms of assembly, dimer. As to expression, expressed in seeds (at protein level).

The protein localises to the cytoplasm. It is found in the cytosol. Binds hemin and thiamine. In Lens culinaris (Lentil), this protein is Albumin-2.